The primary structure comprises 185 residues: Ribosome-recycling factor (185 aa).

This sequence belongs to the RRF family.

The protein resides in the cytoplasm. Functionally, responsible for the release of ribosomes from messenger RNA at the termination of protein biosynthesis. May increase the efficiency of translation by recycling ribosomes from one round of translation to another. The polypeptide is Ribosome-recycling factor (Shewanella baltica (strain OS185)).